The sequence spans 547 residues: TBCC domain-containing protein 1 (547 aa).

The C-CAP/cofactor C-like domain occupies 304 to 435 (PHTHRMVVMS…LEDHMAQTGL (132 aa)).

The protein belongs to the TBCC family.

Its subcellular location is the cytoplasm. The protein localises to the cytoskeleton. It localises to the microtubule organizing center. It is found in the centrosome. The protein resides in the spindle pole. In terms of biological role, may play a role in the regulation of centrosome and Golgi apparatus positioning. The polypeptide is TBCC domain-containing protein 1 (tbccd1) (Xenopus laevis (African clawed frog)).